A 329-amino-acid chain; its full sequence is GDP-mannose transporter (329 aa).

Topologically, residues M1–S11 are cytoplasmic. A helical transmembrane segment spans residues L12–V32. Topologically, residues T33–G40 are lumenal. A helical membrane pass occupies residues V41–I61. Topologically, residues S62–W83 are cytoplasmic. Residues F84 to L104 form a helical membrane-spanning segment. Over S105–P107 the chain is Lumenal. A helical transmembrane segment spans residues I108 to F128. Topologically, residues G129–R131 are cytoplasmic. Residues V132–Y152 traverse the membrane as a helical segment. The Lumenal segment spans residues G153–N163. A helical membrane pass occupies residues F164–F184. The Cytoplasmic segment spans residues M185–D196. The chain crosses the membrane as a helical span at residues F197 to T217. The Lumenal segment spans residues T218–A237. The helical transmembrane segment at V238 to W258 threads the bilayer. Over C259–T266 the chain is Cytoplasmic. Residues T267 to F287 traverse the membrane as a helical segment. Over K288 to P290 the chain is Lumenal. A helical transmembrane segment spans residues I291–I311. Topologically, residues A312–S329 are cytoplasmic.

The protein belongs to the TPT transporter family. SLC35D subfamily. In terms of assembly, homooligomer.

It localises to the golgi apparatus membrane. The protein localises to the cytoplasmic vesicle membrane. Its subcellular location is the endoplasmic reticulum membrane. In terms of biological role, involved in the import of GDP-mannose from the cytoplasm into the Golgi lumen. The polypeptide is GDP-mannose transporter (VIG4) (Komagataella pastoris (Yeast)).